A 276-amino-acid chain; its full sequence is Alpha N-terminal protein methyltransferase 1 (276 aa).

Residues glycine 96, arginine 101, 118–120 (EPV), 149–150 (LQ), and glutamine 165 contribute to the S-adenosyl-L-methionine site.

This sequence belongs to the methyltransferase superfamily. NTM1 family.

It catalyses the reaction N-terminal L-alanyl-L-prolyl-L-lysyl-[protein] + 3 S-adenosyl-L-methionine = N-terminal N,N,N-trimethyl-L-alanyl-L-prolyl-L-lysyl-[protein] + 3 S-adenosyl-L-homocysteine + 3 H(+). It carries out the reaction N-terminal L-seryl-L-prolyl-L-lysyl-[protein] + 3 S-adenosyl-L-methionine = N-terminal N,N,N-trimethyl-L-seryl-L-prolyl-L-lysyl-[protein] + 3 S-adenosyl-L-homocysteine + 3 H(+). The catalysed reaction is N-terminal L-prolyl-L-prolyl-L-lysyl-[protein] + 2 S-adenosyl-L-methionine = N-terminal N,N-dimethyl-L-prolyl-L-prolyl-L-lysyl-[protein] + 2 S-adenosyl-L-homocysteine + 2 H(+). Alpha-N-methyltransferase that methylates the N-terminus of target proteins containing the N-terminal motif [Ala/Pro/Ser]-Pro-Lys when the initiator Met is cleaved. Specifically catalyzes mono-, di- or tri-methylation of exposed alpha-amino group of Ala or Ser residue in the [Ala/Ser]-Pro-Lys motif and mono- or di-methylation of Pro in the Pro-Pro-Lys motif. The chain is Alpha N-terminal protein methyltransferase 1 from Arabidopsis thaliana (Mouse-ear cress).